We begin with the raw amino-acid sequence, 186 residues long: Lipid A palmitoyltransferase PagP (186 aa).

The N-terminal stretch at 1–25 (MNVSKYVAIFSFVFIQLISVGKVFA) is a signal peptide. Residues H58, D101, and S102 contribute to the active site.

Belongs to the lipid A palmitoyltransferase family. Homodimer.

The protein resides in the cell outer membrane. The catalysed reaction is lipid A (E. coli) + a 1-hexadecanoyl-2-acyl-sn-glycero-3-phosphocholine = hepta-acyl lipid A (E. coli) + a 2-acyl-sn-glycero-3-phosphocholine. The enzyme catalyses lipid IIA + a 1-hexadecanoyl-2-acyl-sn-glycero-3-phosphocholine = lipid IIB + a 2-acyl-sn-glycero-3-phosphocholine. It carries out the reaction lipid IVA (E. coli) + a 1-hexadecanoyl-2-acyl-sn-glycero-3-phosphocholine = lipid IVB (E. coli) + a 2-acyl-sn-glycero-3-phosphocholine. Its activity is regulated as follows. Inhibited by lauryldimethylamine oxide (LDAO) and dodecylphosphocholine (DPC). Transfers a palmitate residue from the sn-1 position of a phospholipid to the N-linked hydroxymyristate on the proximal unit of lipid A or its precursors. Phosphatidylglycerol (PtdGro), phosphatidylethanolamine (PtdEtn), phosphatidylserine (PtdSer) and phosphatidic acid (Ptd-OH) are all effective acyl donors. The chain is Lipid A palmitoyltransferase PagP from Escherichia coli (strain K12).